We begin with the raw amino-acid sequence, 194 residues long: Factor in the germline alpha (194 aa).

The bHLH domain maps to 59–111; it reads ERRRVANAKERERIKNLNRGFAKLKALVPFLPQSRKPSKVDILKGATEYIQIL. Residues 121–137 are compositionally biased toward basic and acidic residues; sequence SEKQSPEEQTHSGRPSD. A disordered region spans residues 121–163; sequence SEKQSPEEQTHSGRPSDPHVSSTRELLGNATQPTSCASGLKKE. Over residues 139–157 the composition is skewed to polar residues; it reads HVSSTRELLGNATQPTSCA.

As to quaternary structure, heterodimer with TCF3/isoform E12. Expressed only in the oocytes within the ovary and at lower level in the testis. Found in the resting oocytes of the primordial follicle cells, at the periphery of the ovary and in the hilar region. Also detected in growing oocytes, but at lower levels.

The protein resides in the nucleus. Functionally, germ-line specific transcription factor implicated in postnatal oocyte-specific gene expression. Plays a key regulatory role in the expression of multiple oocyte-specific genes, including those that initiate folliculogenesis and those that encode the zona pellucida (ZP1, ZP2 and ZP3) required for fertilization and early embryonic survival. Essential for oocytes to survive and form primordial follicles. The persistence of FIGLA in adult females suggests that it may regulate additional pathways that are essential for normal ovarian development. Binds to the E-box (5'-CANNTG-3') of the ZPs (ZP1, ZP2, ZP3) promoters. The polypeptide is Factor in the germline alpha (Figla) (Mus musculus (Mouse)).